The primary structure comprises 497 residues: Zinc finger CCCH domain-containing protein 22 (497 aa).

The C3H1-type zinc finger occupies 136 to 163 (SESMMICKFFMQQRCRFGSSCRSSHGLD). Residues 236-281 (AQMTDDDGEEEEEEDEQQSASDSEDSVSSDYDEGSPQGIGFLESTN) are disordered. The segment covering 239-268 (TDDDGEEEEEEDEQQSASDSEDSVSSDYDE) has biased composition (acidic residues). Residues 300 to 346 (TRGIASKMMASMGYREGMGLGVSGQGILNPILVKVLPAKRSLDYALE) enclose the G-patch domain. Residues 352–387 (ECKSEKQKKKRSRGGKRKRGKKFAEAAKAAKQEEES) form a disordered region. Over residues 357-372 (KQKKKRSRGGKRKRGK) the composition is skewed to basic residues. A compositionally biased stretch (basic and acidic residues) spans 373-387 (KFAEAAKAAKQEEES).

In Arabidopsis thaliana (Mouse-ear cress), this protein is Zinc finger CCCH domain-containing protein 22.